A 246-amino-acid chain; its full sequence is Allergin-1 (246 aa).

A signal peptide spans 1-33 (MGDGDSPMCLSAVSFKGIRCWLDKLLLWALTIS). The Extracellular segment spans residues 34–150 (ITLQNAAVDC…DESCPSCRLS (117 aa)). The 80-residue stretch at 52 to 131 (PSPNLNSSMN…VNVSNLMKYS (80 aa)) folds into the Ig-like C2-type domain. Residue Asn68 is glycosylated (N-linked (GlcNAc...) asparagine). The cysteines at positions 73 and 120 are disulfide-linked. Residues 151–171 (LLLPGLLLGILVIVLVLAYLI) form a helical membrane-spanning segment. The Cytoplasmic portion of the chain corresponds to 172–246 (HLKYKKGKKT…ADYIYSELTH (75 aa)). 2 short sequence motifs (ITIM motif) span residues 214 to 219 (IHYATP) and 239 to 244 (YIYSEL). Phosphotyrosine is present on residues Tyr216 and Tyr241.

In terms of assembly, monomer. Interacts (tyrosine-phosphorylated) with PTPN6, PTPN11 and INPP5D. N-glycosylated. In terms of tissue distribution, expressed in myeloid cells (dendritic cells, macrophages and neutrophils but not in T-cells, B-cells or natural killer cells) and mast cells (at protein level).

The protein localises to the cell membrane. The protein resides in the secreted. Immunoglobulin-like receptor which plays an inhibitory role in degranulation of mast cells. Negatively regulates IgE-mediated mast cell activation and suppresses the type I immediate hypersensitivity reaction. The sequence is that of Allergin-1 (Milr1) from Mus musculus (Mouse).